Here is a 328-residue protein sequence, read N- to C-terminus: UPF0421 protein SAUSA300_1870 (328 aa).

A run of 4 helical transmembrane segments spans residues 19–39 (IAIFLTAVFCMALDLTPIYAI), 61–81 (LPATVIGAGFAVLFTYLFGDQ), 108–128 (VAVLTSLAMIPGIHDAYIFNF), and 132–152 (TLTAIIGLVTSGLINFMVFPP).

This sequence belongs to the UPF0421 family.

Its subcellular location is the cell membrane. This Staphylococcus aureus (strain USA300) protein is UPF0421 protein SAUSA300_1870.